The sequence spans 1888 residues: E3 ubiquitin-protein ligase UBR3 (1888 aa).

The tract at residues M1–L24 is disordered. The UBR-type zinc-finger motif lies at A118–I189. Residues G339–K362 form a disordered region. A phosphoserine mark is found at S343 and S344. 2 helical membrane passes run M761–M781 and L919–D939. Disordered stretches follow at residues A1008–Q1028 and V1164–A1186. Polar residues predominate over residues P1016–Q1028. Residues K1168–S1199 are a coiled coil. Residues T1170–A1186 show a composition bias toward basic and acidic residues. A Phosphoserine modification is found at S1199. Residues D1306–R1364 form an RING-type; degenerate zinc finger. A helical membrane pass occupies residues Q1806–I1826.

The protein belongs to the E3 ubiquitin-protein ligase UBR1-like family. Interacts with UBE2A and UBE2B.

Its subcellular location is the membrane. The enzyme catalyses S-ubiquitinyl-[E2 ubiquitin-conjugating enzyme]-L-cysteine + [acceptor protein]-L-lysine = [E2 ubiquitin-conjugating enzyme]-L-cysteine + N(6)-ubiquitinyl-[acceptor protein]-L-lysine.. It functions in the pathway protein modification; protein ubiquitination. Its function is as follows. E3 ubiquitin-protein ligase which is a component of the N-end rule pathway. Does not bind to proteins bearing specific N-terminal residues that are destabilizing according to the N-end rule, leading to their ubiquitination and subsequent degradation. May play a role in Shh signaling by mediating the ubiquitination of Kif7. May be important for MYH9 function in certain tissues, possibly by regulating the ubiquitination of MYH9 and consequently affecting its interaction with MYO7A. This is E3 ubiquitin-protein ligase UBR3 (UBR3) from Homo sapiens (Human).